The sequence spans 148 residues: EKC/KEOPS complex subunit Lage3 (148 aa).

The tract at residues 1-21 (MQTAHTGLSHTADGADGQTSR) is disordered.

Belongs to the CTAG/PCC1 family. In terms of assembly, component of the EKC/KEOPS complex composed of at least GON7, TP53RK, TPRKB, OSGEP and LAGE3; the whole complex dimerizes.

Its subcellular location is the cytoplasm. It is found in the nucleus. Functionally, component of the EKC/KEOPS complex that is required for the formation of a threonylcarbamoyl group on adenosine at position 37 (t(6)A37) in tRNAs that read codons beginning with adenine. The complex is probably involved in the transfer of the threonylcarbamoyl moiety of threonylcarbamoyl-AMP (TC-AMP) to the N6 group of A37. LAGE3 functions as a dimerization module for the complex. The polypeptide is EKC/KEOPS complex subunit Lage3 (Mus musculus (Mouse)).